The primary structure comprises 2319 residues: Neurogenic locus notch homolog protein 3 (2319 aa).

Basic residues predominate over residues 1–14; the sequence is MGPGARGRRRRRRL. The segment at 1 to 20 is disordered; it reads MGPGARGRRRRRRLMALPPP. A signal peptide spans 1–40; the sequence is MGPGARGRRRRRRLMALPPPPPPMRALPLLLLLLAGLGAA. EGF-like domains are found at residues 41 to 79, 80 to 120, and 121 to 158; these read APPC…ERCQ, LEDP…PDCS, and LPDP…RNCR. The Extracellular portion of the chain corresponds to 41 to 1645; the sequence is APPCLDGSPC…LEPPEQSVPL (1605 aa). Cystine bridges form between Cys-44–Cys-56, Cys-50–Cys-67, Cys-69–Cys-78, Cys-84–Cys-95, Cys-89–Cys-108, Cys-110–Cys-119, Cys-125–Cys-136, Cys-130–Cys-146, Cys-148–Cys-157, Cys-164–Cys-176, Cys-170–Cys-185, Cys-187–Cys-196, Cys-203–Cys-214, Cys-208–Cys-224, Cys-226–Cys-235, Cys-242–Cys-253, Cys-247–Cys-262, Cys-264–Cys-273, Cys-280–Cys-293, Cys-287–Cys-302, Cys-304–Cys-313, Cys-320–Cys-331, Cys-325–Cys-340, Cys-342–Cys-351, Cys-357–Cys-368, Cys-362–Cys-379, Cys-381–Cys-390, Cys-397–Cys-410, Cys-404–Cys-419, Cys-421–Cys-430, Cys-437–Cys-448, Cys-442–Cys-457, Cys-459–Cys-468, Cys-475–Cys-486, Cys-480–Cys-495, Cys-497–Cys-506, Cys-513–Cys-524, Cys-518–Cys-533, Cys-535–Cys-544, Cys-551–Cys-561, Cys-556–Cys-570, Cys-572–Cys-581, Cys-588–Cys-599, Cys-593–Cys-608, Cys-610–Cys-619, Cys-626–Cys-636, Cys-631–Cys-645, Cys-647–Cys-656, Cys-663–Cys-674, Cys-668–Cys-683, Cys-685–Cys-694, Cys-701–Cys-711, Cys-706–Cys-720, Cys-722–Cys-731, Cys-740–Cys-751, Cys-745–Cys-760, Cys-762–Cys-771, Cys-777–Cys-788, Cys-782–Cys-798, Cys-800–Cys-809, Cys-816–Cys-828, Cys-822–Cys-837, Cys-839–Cys-848, Cys-855–Cys-866, Cys-860–Cys-875, Cys-877–Cys-886, Cys-893–Cys-903, Cys-898–Cys-912, Cys-914–Cys-923, Cys-930–Cys-941, Cys-935–Cys-950, Cys-952–Cys-961, Cys-968–Cys-979, Cys-973–Cys-988, Cys-990–Cys-999, Cys-1006–Cys-1017, Cys-1011–Cys-1024, Cys-1026–Cys-1035, Cys-1042–Cys-1063, Cys-1057–Cys-1072, Cys-1074–Cys-1083, Cys-1090–Cys-1101, Cys-1095–Cys-1110, Cys-1112–Cys-1121, Cys-1128–Cys-1139, Cys-1133–Cys-1148, Cys-1150–Cys-1159, Cys-1166–Cys-1184, Cys-1178–Cys-1193, Cys-1195–Cys-1204, Cys-1211–Cys-1224, Cys-1216–Cys-1234, Cys-1236–Cys-1245, Cys-1252–Cys-1263, Cys-1257–Cys-1277, Cys-1279–Cys-1288, Cys-1295–Cys-1306, Cys-1300–Cys-1315, and Cys-1317–Cys-1326. Residues 160–197 form the EGF-like 4; calcium-binding domain; sequence DIDECRAGASCRHGGTCINTPGSFHCLCPLGYTGLLCE. The EGF-like 5 domain occupies 199–236; the sequence is PIVPCAPSPCRNGGTCRQSSDVTYDCACLPGFEGQNCE. An EGF-like 6; calcium-binding domain is found at 238 to 274; the sequence is NVDDCPGHRCLNGGTCVDGVNTYNCQCPPEWTGQFCT. Residues 276–314 enclose the EGF-like 7 domain; it reads DVDECQLQPNACHNGGTCFNLLGGHSCVCVNGWTGESCS. Residues 316 to 352 form the EGF-like 8; calcium-binding domain; the sequence is NIDDCATAVCFHGATCHDRVASFYCACPMGKTGLLCH. One can recognise an EGF-like 9 domain in the interval 353 to 391; that stretch reads LDDACVSNPCHEDAICDTNPVSGRAICTCPPGFTGGACD. Residues 393–431 enclose the EGF-like 10; calcium-binding domain; the sequence is DVDECSIGANPCEHLGRCVNTQGSFLCQCGRGYTGPRCE. Residues 433-469 enclose the EGF-like 11; calcium-binding domain; sequence DVNECLSGPCRNQATCLDRIGQFTCICMAGFTGTFCE. Residues 471–507 enclose the EGF-like 12; calcium-binding domain; the sequence is DIDECQSSPCVNGGVCKDRVNGFSCTCPSGFSGSTCQ. Residues 509 to 545 enclose the EGF-like 13; calcium-binding domain; that stretch reads DVDECASTPCRNGAKCVDQPDGYECRCAEGFEGTLCE. Residues 547–582 enclose the EGF-like 14; calcium-binding domain; it reads NVDDCSPDPCHHGRCVDGIASFSCACAPGYTGIRCE. The EGF-like 15; calcium-binding domain occupies 584-620; the sequence is QVDECRSQPCRYGGKCLDLVDKYLCRCPPGTTGVNCE. Residues 622-657 enclose the EGF-like 16; calcium-binding domain; it reads NIDDCASNPCTFGVCRDGINRYDCVCQPGFTGPLCN. The EGF-like 17; calcium-binding domain maps to 659-695; sequence EINECASSPCGEGGSCVDGENGFHCLCPPGSLPPLCL. EGF-like domains follow at residues 697 to 732, 736 to 772, and 773 to 810; these read ANHP…PRCS, APDA…HQCE, and VLSP…PRCQ. Residues 812-849 enclose the EGF-like 21; calcium-binding domain; it reads DVDECAGASPCGPHGTCTNLPGSFRCICHGGYTGPFCD. One can recognise an EGF-like 22; calcium-binding domain in the interval 851-887; the sequence is DIDDCDPNPCLNGGSCQDGVGSFSCSCLSGFAGPRCA. An EGF-like 23; calcium-binding domain is found at 889–924; sequence DVDECLSSPCGPGTCTDHVASFTCTCPPGYGGFHCE. 5 EGF-like domains span residues 926 to 962, 964 to 1000, 1002 to 1036, 1038 to 1084, and 1086 to 1122; these read DLLD…THCQ, KVDP…NQCQ, PVDW…PLCD, PSLP…SHCE, and EVDP…DSCE. The EGF-like 29; calcium-binding domain occupies 1124–1160; sequence DVDECASQPCQNGGSCIDLVAHYLCSCPPGTLGVLCE. An EGF-like 30; calcium-binding domain is found at 1162 to 1205; the sequence is NEDDCGPGPSLDSGLRCLHNGTCVDLVGGFRCNCPPGYTGLHCE. The N-linked (GlcNAc...) asparagine glycan is linked to Asn-1181. EGF-like domains lie at 1207-1246, 1248-1289, 1291-1327, and 1337-1375; these read DINE…PRCQ, ALFP…LRCE, VARS…PSCR, and TNTS…PRCE. Asn-1338 carries an N-linked (GlcNAc...) asparagine glycan. 12 cysteine pairs are disulfide-bonded: Cys-1341–Cys-1352, Cys-1346–Cys-1363, Cys-1365–Cys-1374, Cys-1389–Cys-1412, Cys-1394–Cys-1407, Cys-1403–Cys-1419, Cys-1430–Cys-1453, Cys-1435–Cys-1448, Cys-1444–Cys-1460, Cys-1469–Cys-1495, Cys-1477–Cys-1490, and Cys-1486–Cys-1502. 3 LNR repeats span residues 1389–1429, 1430–1467, and 1469–1507; these read CPRA…PWRQ, CEAL…GRDR, and CNPV…SEVP. Asn-1440 is a glycosylation site (N-linked (GlcNAc...) asparagine). The chain crosses the membrane as a helical span at residues 1646–1666; that stretch reads LPLLVAGAVFLLVIFVLGVMV. Topologically, residues 1667 to 2319 are cytoplasmic; sequence ARRKREHSTL…EVTPKRQVMA (653 aa). ANK repeat units follow at residues 1840 to 1869, 1873 to 1903, 1907 to 1936, 1940 to 1969, and 1973 to 2002; these read TGET…DTNA, SGRT…DLDA, DGST…DVNA, LGKS…NKDM, and KEET…NREI. 2 disordered regions span residues 2026–2046 and 2059–2129; these read LDQP…PLLC and QSGT…EGPY. The segment covering 2029–2046 has biased composition (low complexity); that stretch reads PSGPRSPSGPHGLGPLLC. Arg-2175 carries the omega-N-methylarginine modification. Residues 2197 to 2319 form a disordered region; the sequence is LNPATPVSPH…EVTPKRQVMA (123 aa). A compositionally biased stretch (low complexity) spans 2263–2288; the sequence is SLSDWSDSTPSPATATSATAAGALPA. Residues 2297 to 2306 show a composition bias toward polar residues; sequence SLPQSQTQLG.

The protein belongs to the NOTCH family. Heterodimer of a C-terminal fragment N(TM) and a N-terminal fragment N(EC) which are probably linked by disulfide bonds. Interacts with MAML1, MAML2 and MAML3 which act as transcriptional coactivators for NOTCH3. Interacts with PSMA1. Interacts with HIF1AN. In terms of processing, synthesized in the endoplasmic reticulum as an inactive form which is proteolytically cleaved by a furin-like convertase in the trans-Golgi network before it reaches the plasma membrane to yield an active, ligand-accessible form. Cleavage results in a C-terminal fragment N(TM) and a N-terminal fragment N(EC). Following ligand binding, it is cleaved by TNF-alpha converting enzyme (TACE) to yield a membrane-associated intermediate fragment called notch extracellular truncation (NEXT). This fragment is then cleaved by presenilin dependent gamma-secretase to release a notch-derived peptide containing the intracellular domain (NICD) from the membrane. Phosphorylated. Post-translationally, hydroxylated by HIF1AN. As to expression, expressed in postnatal central nervous system (CNS) germinal zones and, in early postnatal life, within numerous cells throughout the CNS. It is more highly localized to ventricular germinal zones.

It is found in the cell membrane. Its subcellular location is the nucleus. Functionally, functions as a receptor for membrane-bound ligands Jagged1, Jagged2 and Delta1 to regulate cell-fate determination. Upon ligand activation through the released notch intracellular domain (NICD) it forms a transcriptional activator complex with RBPJ/RBPSUH and activates genes of the enhancer of split locus. Affects the implementation of differentiation, proliferation and apoptotic programs. Acts instructively to control the cell fate determination of CNS multipotent progenitor cells, resulting in astroglial induction and neuron/oligodendrocyte suppression. In Rattus norvegicus (Rat), this protein is Neurogenic locus notch homolog protein 3 (Notch3).